Here is a 126-residue protein sequence, read N- to C-terminus: Probable V-type proton ATPase subunit G (126 aa).

Residues 23-45 (NEARKRKLQRTKQAKQEAQAEVE) are disordered. A compositionally biased stretch (basic residues) spans 26 to 35 (RKRKLQRTKQ).

Belongs to the V-ATPase G subunit family. As to quaternary structure, V-ATPase is a heteromultimeric enzyme made up of two complexes: the ATP-hydrolytic V1 complex and the proton translocation V0 complex. The V1 complex consists of three catalytic AB heterodimers that form a heterohexamer, three peripheral stalks each consisting of EG heterodimers, one central rotor including subunits D and F, and the regulatory subunits C and H. The proton translocation complex V0 consists of the proton transport subunit a, a ring of proteolipid subunits c9c'', rotary subunit d, subunits e and f, and the accessory subunits vah-19/Ac45 and vah-20/PRR.

Its function is as follows. Subunit of the V1 complex of vacuolar(H+)-ATPase (V-ATPase), a multisubunit enzyme composed of a peripheral complex (V1) that hydrolyzes ATP and a membrane integral complex (V0) that translocates protons. V-ATPase is responsible for acidifying and maintaining the pH of intracellular compartments and in some cell types, is targeted to the plasma membrane, where it is responsible for acidifying the extracellular environment. In neurons, required for necrotic cell death by promoting intracellular acidification. The sequence is that of Probable V-type proton ATPase subunit G from Caenorhabditis briggsae.